The following is a 425-amino-acid chain: 3-phosphoshikimate 1-carboxyvinyltransferase (425 aa).

Residues lysine 23, serine 24, and arginine 28 each coordinate 3-phosphoshikimate. A phosphoenolpyruvate-binding site is contributed by lysine 23. Residues glycine 96 and arginine 124 each coordinate phosphoenolpyruvate. The 3-phosphoshikimate site is built by threonine 170, serine 171, glutamine 172, serine 198, aspartate 314, and lysine 341. Residue glutamine 172 coordinates phosphoenolpyruvate. Aspartate 314 serves as the catalytic Proton acceptor. Phosphoenolpyruvate-binding residues include arginine 345, arginine 386, and lysine 411.

Belongs to the EPSP synthase family. Monomer.

Its subcellular location is the cytoplasm. The catalysed reaction is 3-phosphoshikimate + phosphoenolpyruvate = 5-O-(1-carboxyvinyl)-3-phosphoshikimate + phosphate. Its pathway is metabolic intermediate biosynthesis; chorismate biosynthesis; chorismate from D-erythrose 4-phosphate and phosphoenolpyruvate: step 6/7. Its function is as follows. Catalyzes the transfer of the enolpyruvyl moiety of phosphoenolpyruvate (PEP) to the 5-hydroxyl of shikimate-3-phosphate (S3P) to produce enolpyruvyl shikimate-3-phosphate and inorganic phosphate. The chain is 3-phosphoshikimate 1-carboxyvinyltransferase from Nostoc sp. (strain PCC 7120 / SAG 25.82 / UTEX 2576).